The primary structure comprises 859 residues: Villin-like protein (859 aa).

Gelsolin-like repeat units lie at residues 24–76 (LKML…EARE), 148–188 (VSAT…SEKA), 264–308 (LVVQ…QEKK), 401–450 (LQRQ…EDTK), 521–561 (TRTM…DQRE), and 624–665 (LVLT…WKKE). Residues 793 to 859 (SMVNGSLPRE…QQAKKKLGFF (67 aa)) form the HP domain.

Belongs to the villin/gelsolin family.

In terms of biological role, possible tumor suppressor. The sequence is that of Villin-like protein from Mus musculus (Mouse).